A 440-amino-acid polypeptide reads, in one-letter code: Signal recognition particle 54 kDa protein (440 aa).

Residues 104 to 111 (GLQGSGKT), 184 to 188 (DTAGR), and 242 to 245 (TKLD) each bind GTP.

It belongs to the GTP-binding SRP family. SRP54 subfamily. Part of the signal recognition particle protein translocation system, which is composed of SRP and FtsY. Archaeal SRP consists of a 7S RNA molecule of 300 nucleotides and two protein subunits: SRP54 and SRP19.

It is found in the cytoplasm. The catalysed reaction is GTP + H2O = GDP + phosphate + H(+). Involved in targeting and insertion of nascent membrane proteins into the cytoplasmic membrane. Binds to the hydrophobic signal sequence of the ribosome-nascent chain (RNC) as it emerges from the ribosomes. The SRP-RNC complex is then targeted to the cytoplasmic membrane where it interacts with the SRP receptor FtsY. The protein is Signal recognition particle 54 kDa protein of Methanosarcina acetivorans (strain ATCC 35395 / DSM 2834 / JCM 12185 / C2A).